Consider the following 112-residue polypeptide: Urease subunit beta (112 aa).

It belongs to the urease beta subunit family. As to quaternary structure, heterotrimer of UreA (gamma), UreB (beta) and UreC (alpha) subunits. Three heterotrimers associate to form the active enzyme.

The protein resides in the cytoplasm. The catalysed reaction is urea + 2 H2O + H(+) = hydrogencarbonate + 2 NH4(+). It functions in the pathway nitrogen metabolism; urea degradation; CO(2) and NH(3) from urea (urease route): step 1/1. The chain is Urease subunit beta from Thioalkalivibrio sulfidiphilus (strain HL-EbGR7).